We begin with the raw amino-acid sequence, 191 residues long: NADH-quinone oxidoreductase subunit B 2 (191 aa).

[4Fe-4S] cluster contacts are provided by C69, C70, C134, and C164.

Belongs to the complex I 20 kDa subunit family. As to quaternary structure, NDH-1 is composed of 14 different subunits. Subunits NuoB, C, D, E, F, and G constitute the peripheral sector of the complex. Requires [4Fe-4S] cluster as cofactor.

Its subcellular location is the cell inner membrane. The catalysed reaction is a quinone + NADH + 5 H(+)(in) = a quinol + NAD(+) + 4 H(+)(out). Functionally, NDH-1 shuttles electrons from NADH, via FMN and iron-sulfur (Fe-S) centers, to quinones in the respiratory chain. Couples the redox reaction to proton translocation (for every two electrons transferred, four hydrogen ions are translocated across the cytoplasmic membrane), and thus conserves the redox energy in a proton gradient. This chain is NADH-quinone oxidoreductase subunit B 2, found in Gluconacetobacter diazotrophicus (strain ATCC 49037 / DSM 5601 / CCUG 37298 / CIP 103539 / LMG 7603 / PAl5).